Consider the following 209-residue polypeptide: Uracil phosphoribosyltransferase (209 aa).

5-phospho-alpha-D-ribose 1-diphosphate-binding positions include arginine 79, arginine 104, and 131 to 139 (DPMLATGGS). Residues isoleucine 194 and 199–201 (GDA) contribute to the uracil site. Residue aspartate 200 coordinates 5-phospho-alpha-D-ribose 1-diphosphate.

Belongs to the UPRTase family. The cofactor is Mg(2+).

The enzyme catalyses UMP + diphosphate = 5-phospho-alpha-D-ribose 1-diphosphate + uracil. Its pathway is pyrimidine metabolism; UMP biosynthesis via salvage pathway; UMP from uracil: step 1/1. With respect to regulation, allosterically activated by GTP. Its function is as follows. Catalyzes the conversion of uracil and 5-phospho-alpha-D-ribose 1-diphosphate (PRPP) to UMP and diphosphate. The sequence is that of Uracil phosphoribosyltransferase from Alkaliphilus oremlandii (strain OhILAs) (Clostridium oremlandii (strain OhILAs)).